Reading from the N-terminus, the 336-residue chain is Tetraacyldisaccharide 4'-kinase (336 aa).

60-67 provides a ligand contact to ATP; it reads TVGGTGKT.

Belongs to the LpxK family.

It catalyses the reaction a lipid A disaccharide + ATP = a lipid IVA + ADP + H(+). It functions in the pathway glycolipid biosynthesis; lipid IV(A) biosynthesis; lipid IV(A) from (3R)-3-hydroxytetradecanoyl-[acyl-carrier-protein] and UDP-N-acetyl-alpha-D-glucosamine: step 6/6. In terms of biological role, transfers the gamma-phosphate of ATP to the 4'-position of a tetraacyldisaccharide 1-phosphate intermediate (termed DS-1-P) to form tetraacyldisaccharide 1,4'-bis-phosphate (lipid IVA). In Pseudomonas fluorescens (strain Pf0-1), this protein is Tetraacyldisaccharide 4'-kinase.